The primary structure comprises 432 residues: Uracil permease (432 aa).

Helical transmembrane passes span 25–45, 65–85, 89–109, 124–144, 155–175, 181–201, 206–226, 228–248, 305–325, 330–350, 370–390, and 393–413; these read LFAM…DPSI, VPAY…AKTA, GAAM…ALII, VVVG…AVGM, LLHF…SVLA, LIPV…VGLV, VAAA…DYPV, VTWE…SEHI, VYSV…GFVG, LISS…FGII, NLVI…LKIS, and FQIT…LILP.

This sequence belongs to the nucleobase:cation symporter-2 (NCS2) (TC 2.A.40) family.

Its subcellular location is the cell membrane. Functionally, transport of uracil in the cell. The polypeptide is Uracil permease (pyrP) (Bacillus caldolyticus).